A 408-amino-acid chain; its full sequence is Serine/threonine-protein kinase UCNL (408 aa).

The Protein kinase domain occupies 21–341 (IKALKILGKG…AAEIKELAFF (321 aa)). Residues 27–35 (LGKGATGTV) and Lys-54 contribute to the ATP site. The active-site Proton acceptor is Asp-152. The AGC-kinase C-terminal domain maps to 342-408 (AGVRWDLLTE…CRKNDPFIEF (67 aa)).

This sequence belongs to the protein kinase superfamily. AGC Ser/Thr protein kinase family. Expressed in the epidermis and cortex of the transition zone of the root apex. Expressed in rosette leaves, stems, flowers and siliques.

It localises to the cytoplasm. Its subcellular location is the nucleus. It catalyses the reaction L-seryl-[protein] + ATP = O-phospho-L-seryl-[protein] + ADP + H(+). The enzyme catalyses L-threonyl-[protein] + ATP = O-phospho-L-threonyl-[protein] + ADP + H(+). In terms of biological role, regulates planar ovule integument development. The sequence is that of Serine/threonine-protein kinase UCNL from Arabidopsis thaliana (Mouse-ear cress).